A 686-amino-acid chain; its full sequence is Probable metal-nicotianamine transporter YSL4 (686 aa).

The next 14 helical transmembrane spans lie at 27–47, 53–73, 96–116, 151–171, 203–223, 264–284, 308–328, 373–393, 405–425, 441–461, 488–508, 554–574, 596–616, and 629–649; these read WLVT…FCFV, MMTG…FFLL, MFLI…GFAT, FFLI…IMII, VMTI…QWFY, IVNF…YPYL, VFIS…ILVT, IPMF…MVAM, VGVL…ATGL, IFAA…VSGI, AMIA…PCIF, CVEL…LVLV, FFAG…LLLW, and AAVA…SALL.

Belongs to the YSL (TC 2.A.67.2) family.

It is found in the membrane. In terms of biological role, may be involved in the transport of nicotianamine-chelated metals. The chain is Probable metal-nicotianamine transporter YSL4 (YSL4) from Oryza sativa subsp. japonica (Rice).